Consider the following 330-residue polypeptide: Glucokinase (330 aa).

Belongs to the ROK (NagC/XylR) family.

Its subcellular location is the cytoplasm. The catalysed reaction is D-glucose + ATP = D-glucose 6-phosphate + ADP + H(+). The protein is Glucokinase (glcK) of Halalkalibacterium halodurans (strain ATCC BAA-125 / DSM 18197 / FERM 7344 / JCM 9153 / C-125) (Bacillus halodurans).